Reading from the N-terminus, the 454-residue chain is Lipase member H (454 aa).

A signal peptide spans 1–23; that stretch reads MIYRKIIWGILYVTLMLFDTHRA. 3 N-linked (GlcNAc...) asparagine glycosylation sites follow: asparagine 73, asparagine 137, and asparagine 151. The Nucleophile role is filled by serine 161. Aspartate 185 (charge relay system) is an active-site residue. A disulfide bond links cysteine 240 and cysteine 253. Histidine 255 serves as the catalytic Charge relay system. Residue asparagine 267 is glycosylated (N-linked (GlcNAc...) asparagine). 2 disulfide bridges follow: cysteine 277/cysteine 288 and cysteine 291/cysteine 299. The N-linked (GlcNAc...) asparagine glycan is linked to asparagine 358. Cysteine 430 and cysteine 449 are disulfide-bonded.

This sequence belongs to the AB hydrolase superfamily. Lipase family.

The protein localises to the secreted. Its subcellular location is the cell membrane. The enzyme catalyses 1-hexadecanoyl-2-(9Z-octadecenoyl)-sn-glycero-3-phosphate + H2O = 2-(9Z-octadecenoyl)-sn-glycero-3-phosphate + hexadecanoate + H(+). Functionally, hydrolyzes specifically phosphatidic acid (PA) to produce 2-acyl lysophosphatidic acid (LPA; a potent bioactive lipid mediator) and fatty acid. Does not hydrolyze other phospholipids, like phosphatidylserine (PS), phosphatidylcholine (PC) and phosphatidylethanolamine (PE) or triacylglycerol (TG). This Danio rerio (Zebrafish) protein is Lipase member H (liph).